The primary structure comprises 570 residues: MEAPEEPAPVRGGPEATLEVRGSRCLRLSAFREELRALLVLAGPAFLVQLMVFLISFISSVFCGHLGKLELDAVTLAIAVINVTGVSVGFGLSSACDTLISQTYGSQNLKHVGVILQRSALVLLLCCFPCWALFLNTQHILLLFRQDPDVSRLTQTYVTIFIPALPATFLYMLQVKYLLNQGIVLPQIVTGVAANLVNALANYLFLHQLHLGVIGSALANLISQYTLALLLFLYILGKKLHQATWGGWSLECLQDWASFLRLAIPSMLMLCMEWWAYEVGSFLSGILGMVELGAQSIVYELAIIVYMVPAGFSVAASVRVGNALGAGDMEQARKSSTVSLLITVLFAVAFSVLLLSCKDHVGYIFTTDRDIINLVAQVVPIYAVSHLFEALACTSGGVLRGSGNQKVGAIVNTIGYYVVGLPIGIALMFATTLGVMGLWSGIIICTVFQAVCFLGFIIQLNWKKACQQAQVHANLKVNNVPRSGNSALPQDPLHPGCPENLEGILTNDVGKTGEPQSDQQMRQEEPLPEHPQDGAKLSRKQLVLRRGLLLLGVFLILLVGILVRFYVRIQ.

Met-1 bears the N-acetylmethionine mark. The Cytoplasmic portion of the chain corresponds to 1–37 (MEAPEEPAPVRGGPEATLEVRGSRCLRLSAFREELRA). A helical transmembrane segment spans residues 38 to 58 (LLVLAGPAFLVQLMVFLISFI). The Extracellular segment spans residues 59–72 (SSVFCGHLGKLELD). Residues 73–93 (AVTLAIAVINVTGVSVGFGLS) form a helical membrane-spanning segment. The Cytoplasmic segment spans residues 94 to 123 (SACDTLISQTYGSQNLKHVGVILQRSALVL). Residues 124-144 (LLCCFPCWALFLNTQHILLLF) traverse the membrane as a helical segment. Topologically, residues 145 to 152 (RQDPDVSR) are extracellular. A helical membrane pass occupies residues 153–173 (LTQTYVTIFIPALPATFLYML). The Cytoplasmic portion of the chain corresponds to 174–176 (QVK). The chain crosses the membrane as a helical span at residues 177–197 (YLLNQGIVLPQIVTGVAANLV). Topologically, residues 198-216 (NALANYLFLHQLHLGVIGS) are extracellular. A helical transmembrane segment spans residues 217–237 (ALANLISQYTLALLLFLYILG). Residues 238–256 (KKLHQATWGGWSLECLQDW) lie on the Cytoplasmic side of the membrane. A helical membrane pass occupies residues 257–276 (ASFLRLAIPSMLMLCMEWWA). The Extracellular portion of the chain corresponds to 277–295 (YEVGSFLSGILGMVELGAQ). A helical membrane pass occupies residues 296–316 (SIVYELAIIVYMVPAGFSVAA). The Cytoplasmic portion of the chain corresponds to 317 to 336 (SVRVGNALGAGDMEQARKSS). A helical membrane pass occupies residues 337–357 (TVSLLITVLFAVAFSVLLLSC). The Extracellular portion of the chain corresponds to 358–370 (KDHVGYIFTTDRD). The chain crosses the membrane as a helical span at residues 371–391 (IINLVAQVVPIYAVSHLFEAL). Residues 392 to 408 (ACTSGGVLRGSGNQKVG) lie on the Cytoplasmic side of the membrane. The chain crosses the membrane as a helical span at residues 409–429 (AIVNTIGYYVVGLPIGIALMF). Residues 430-437 (ATTLGVMG) are Extracellular-facing. The helical transmembrane segment at 438–458 (LWSGIIICTVFQAVCFLGFII) threads the bilayer. At 459-546 (QLNWKKACQQ…LSRKQLVLRR (88 aa)) the chain is on the cytoplasmic side. Positions 508-534 (DVGKTGEPQSDQQMRQEEPLPEHPQDG) are disordered. Positions 521–533 (MRQEEPLPEHPQD) are enriched in basic and acidic residues. A helical membrane pass occupies residues 547–567 (GLLLLGVFLILLVGILVRFYV). Over 568-570 (RIQ) the chain is Extracellular.

The protein belongs to the multi antimicrobial extrusion (MATE) (TC 2.A.66.1) family. In terms of tissue distribution, widely expressed. The highest expression is found in adrenal gland, and to a lower extent in liver, skeletal muscle and kidney. In testis, primarily localized throughout the adluminal compartment of the seminiferous tubules with expression at the peritubular myoid cells and Leydig cells.

The protein localises to the cell membrane. It is found in the apical cell membrane. It catalyses the reaction thiamine(out) + H(+)(in) = thiamine(in) + H(+)(out). The enzyme catalyses estrone 3-sulfate(in) + H(+)(out) = estrone 3-sulfate(out) + H(+)(in). The catalysed reaction is creatinine(in) + H(+)(out) = creatinine(out) + H(+)(in). It carries out the reaction agmatine(in) + H(+)(out) = agmatine(out) + H(+)(in). Functionally, multidrug efflux pump that functions as a H(+)/organic cation antiporter. Plays a physiological role in the excretion of cationic compounds including endogenous metabolites, drugs, toxins through the kidney and liver, into urine and bile respectively. Mediates the efflux of endogenous compounds such as creatinine, vitamin B1/thiamine, agmatine and estrone-3-sulfate. May also contribute to regulate the transport of cationic compounds in testis across the blood-testis-barrier. This is Multidrug and toxin extrusion protein 1 from Homo sapiens (Human).